The chain runs to 268 residues: E3 ubiquitin-protein ligase IAP-3 (268 aa).

BIR repeat units lie at residues 18 to 84 (KAAR…CPFV) and 111 to 178 (EAAR…CEYV). The Zn(2+) site is built by C148, C151, H168, and C175. Residues 221–256 (CKICLGAEKTVCFVPCGHVVACGKCAAGVTTCPVCR) form an RING-type zinc finger.

The protein belongs to the IAP family. Auto-ubiquitinated.

It catalyses the reaction S-ubiquitinyl-[E2 ubiquitin-conjugating enzyme]-L-cysteine + [acceptor protein]-L-lysine = [E2 ubiquitin-conjugating enzyme]-L-cysteine + N(6)-ubiquitinyl-[acceptor protein]-L-lysine.. Its function is as follows. RING-finger E3 ubiquitin ligase required to prevent cellular apoptosis in infected cells. Ubiquitinates and subsequently targets host pro-apoptotic cellular proteins such as HID for degradation by the proteasome. This chain is E3 ubiquitin-protein ligase IAP-3 (IAP3), found in Orgyia pseudotsugata multicapsid polyhedrosis virus (OpMNPV).